Consider the following 687-residue polypeptide: Translation initiation factor IF-2 (687 aa).

The tr-type G domain occupies 186 to 355 (KRPPIVTVMG…LLTAEMLELK (170 aa)). Residues 195–202 (GHVDHGKT) are G1. Position 195–202 (195–202 (GHVDHGKT)) interacts with GTP. Positions 220–224 (GITQH) are G2. The interval 241–244 (DTPG) is G3. GTP is bound by residues 241–245 (DTPGH) and 295–298 (NKID). The interval 295 to 298 (NKID) is G4. Residues 331–333 (SAK) are G5.

This sequence belongs to the TRAFAC class translation factor GTPase superfamily. Classic translation factor GTPase family. IF-2 subfamily.

It localises to the cytoplasm. Its function is as follows. One of the essential components for the initiation of protein synthesis. Protects formylmethionyl-tRNA from spontaneous hydrolysis and promotes its binding to the 30S ribosomal subunits. Also involved in the hydrolysis of GTP during the formation of the 70S ribosomal complex. This chain is Translation initiation factor IF-2, found in Clostridium botulinum (strain Alaska E43 / Type E3).